A 494-amino-acid chain; its full sequence is Glycosyl hydrolase family 109 protein (494 aa).

2 disordered regions span residues 1-35 (MNDA…LRTT) and 59-86 (EAAQ…MAGV). Positions 1 to 55 (MNDAAPQNPGQDEAKGTGEKDNGGSMSPRSALRTTAGVAGAGLGLSALGTGTASA) form a signal peptide, tat-type signal. Over residues 12 to 22 (DEAKGTGEKDN) the composition is skewed to basic and acidic residues. NAD(+) is bound by residues 103–104 (NR), Asp-125, 174–177 (WDFH), 194–195 (EC), and Asn-223. Substrate-binding positions include Tyr-252, Arg-271, 283 to 286 (YPNH), and Tyr-365. Tyr-283 lines the NAD(+) pocket. Positions 463 to 494 (KANGKPQQIPDFTRGEWKKSRPGTDSEKPSEP) are disordered. The segment covering 475–494 (TRGEWKKSRPGTDSEKPSEP) has biased composition (basic and acidic residues).

It belongs to the Gfo/Idh/MocA family. Glycosyl hydrolase 109 subfamily. It depends on NAD(+) as a cofactor. In terms of processing, predicted to be exported by the Tat system. The position of the signal peptide cleavage has not been experimentally proven.

Its function is as follows. Glycosidase. This is Glycosyl hydrolase family 109 protein from Streptomyces niveus (Streptomyces spheroides).